Reading from the N-terminus, the 230-residue chain is Somatolactin (230 aa).

The N-terminal stretch at 1-23 (MNMMTVKQGVWAALLWPYLLAAS) is a signal peptide. 3 disulfide bridges follow: Cys28–Cys38, Cys88–Cys204, and Cys221–Cys229. N-linked (GlcNAc...) asparagine glycosylation is found at Asn137 and Asn144.

Belongs to the somatotropin/prolactin family.

The protein resides in the secreted. The polypeptide is Somatolactin (Hippoglossus hippoglossus (Atlantic halibut)).